We begin with the raw amino-acid sequence, 490 residues long: UDP-N-acetylmuramate--L-alanine ligase (490 aa).

126–132 (GTHGKTT) provides a ligand contact to ATP.

Belongs to the MurCDEF family.

The protein resides in the cytoplasm. It carries out the reaction UDP-N-acetyl-alpha-D-muramate + L-alanine + ATP = UDP-N-acetyl-alpha-D-muramoyl-L-alanine + ADP + phosphate + H(+). Its pathway is cell wall biogenesis; peptidoglycan biosynthesis. Its function is as follows. Cell wall formation. The chain is UDP-N-acetylmuramate--L-alanine ligase from Sodalis glossinidius (strain morsitans).